Here is a 215-residue protein sequence, read N- to C-terminus: Thiamine-phosphate synthase (215 aa).

Residues 37–41 (QLRIK) and Asn-69 contribute to the 4-amino-2-methyl-5-(diphosphooxymethyl)pyrimidine site. Residues Asp-70 and Asp-89 each contribute to the Mg(2+) site. Ser-108 is a binding site for 4-amino-2-methyl-5-(diphosphooxymethyl)pyrimidine. 134 to 136 (TQT) serves as a coordination point for 2-[(2R,5Z)-2-carboxy-4-methylthiazol-5(2H)-ylidene]ethyl phosphate. 4-amino-2-methyl-5-(diphosphooxymethyl)pyrimidine is bound at residue Lys-137. Residues Gly-166 and 186–187 (VS) each bind 2-[(2R,5Z)-2-carboxy-4-methylthiazol-5(2H)-ylidene]ethyl phosphate.

The protein belongs to the thiamine-phosphate synthase family. It depends on Mg(2+) as a cofactor.

The catalysed reaction is 2-[(2R,5Z)-2-carboxy-4-methylthiazol-5(2H)-ylidene]ethyl phosphate + 4-amino-2-methyl-5-(diphosphooxymethyl)pyrimidine + 2 H(+) = thiamine phosphate + CO2 + diphosphate. It carries out the reaction 2-(2-carboxy-4-methylthiazol-5-yl)ethyl phosphate + 4-amino-2-methyl-5-(diphosphooxymethyl)pyrimidine + 2 H(+) = thiamine phosphate + CO2 + diphosphate. It catalyses the reaction 4-methyl-5-(2-phosphooxyethyl)-thiazole + 4-amino-2-methyl-5-(diphosphooxymethyl)pyrimidine + H(+) = thiamine phosphate + diphosphate. The protein operates within cofactor biosynthesis; thiamine diphosphate biosynthesis; thiamine phosphate from 4-amino-2-methyl-5-diphosphomethylpyrimidine and 4-methyl-5-(2-phosphoethyl)-thiazole: step 1/1. Its function is as follows. Condenses 4-methyl-5-(beta-hydroxyethyl)thiazole monophosphate (THZ-P) and 2-methyl-4-amino-5-hydroxymethyl pyrimidine pyrophosphate (HMP-PP) to form thiamine monophosphate (TMP). In Yersinia pseudotuberculosis serotype I (strain IP32953), this protein is Thiamine-phosphate synthase.